A 167-amino-acid polypeptide reads, in one-letter code: Phospholipase A2 (167 aa).

Residues 1-18 (MQVVLGSLFLLLLSTSHG) form the signal peptide. A propeptide spanning residues 19–33 (WQIRDRIGDNELEER) is cleaved from the precursor. 3 residues coordinate Ca(2+): W41, G43, and G45. Disulfide bonds link C42–C64, C63–C103, C70–C96, C94–C128, and C138–C146. N46 is a glycosylation site (N-linked (GlcNAc...) asparagine). The active site involves H67. Residue D68 coordinates Ca(2+). D97 is an active-site residue.

The protein belongs to the phospholipase A2 family. Group III subfamily. Ca(2+) serves as cofactor. N-glycosylated; contains mannose, N-acetylglucosamine and fucose alphal-6 and/or alphal-3 linked to the innermost N-acetylglucosamine. In terms of tissue distribution, expressed by the venom gland.

The protein localises to the secreted. It catalyses the reaction a 1,2-diacyl-sn-glycero-3-phosphocholine + H2O = a 1-acyl-sn-glycero-3-phosphocholine + a fatty acid + H(+). Functionally, in vivo, intraplantar injection in mice cause spontaneous pain behaviors and paw swelling. PLA2 catalyzes the calcium-dependent hydrolysis of the 2-acyl groups in 3-sn-phosphoglycerides. This is Phospholipase A2 from Apis mellifera (Honeybee).